A 511-amino-acid polypeptide reads, in one-letter code: Maturase K (511 aa).

This sequence belongs to the intron maturase 2 family. MatK subfamily.

The protein localises to the plastid. Its subcellular location is the chloroplast. Functionally, usually encoded in the trnK tRNA gene intron. Probably assists in splicing its own and other chloroplast group II introns. The chain is Maturase K from Poa pratensis (Kentucky bluegrass).